We begin with the raw amino-acid sequence, 91 residues long: Pyruvate kinase (91 aa).

Substrate is bound at residue Arg48. The K(+) site is built by Asn50, Ser52, Asp82, and Thr83. 50 to 53 (NFSH) is a binding site for ATP. Arg89 contacts ATP.

The protein belongs to the pyruvate kinase family. As to quaternary structure, homotetramer. Requires Mg(2+) as cofactor. The cofactor is K(+).

It carries out the reaction pyruvate + ATP = phosphoenolpyruvate + ADP + H(+). The protein operates within carbohydrate degradation; glycolysis; pyruvate from D-glyceraldehyde 3-phosphate: step 5/5. In Leishmania braziliensis, this protein is Pyruvate kinase.